A 219-amino-acid polypeptide reads, in one-letter code: Urease subunit gamma/beta (219 aa).

Residues 1–101 (MFLTPREQEK…LVTVRNPIKS (101 aa)) are urease gamma. The urease beta stretch occupies residues 102 to 219 (SKKTLNTYII…IKRAKERGFA (118 aa)).

The protein in the N-terminal section; belongs to the urease gamma subunit family. In the C-terminal section; belongs to the urease beta subunit family. As to quaternary structure, heterohexamer of 3 UreC (alpha) and 3 UreAB (gamma/beta) subunits.

It localises to the cytoplasm. The enzyme catalyses urea + 2 H2O + H(+) = hydrogencarbonate + 2 NH4(+). The protein operates within nitrogen metabolism; urea degradation; CO(2) and NH(3) from urea (urease route): step 1/1. In Sulfurisphaera tokodaii (strain DSM 16993 / JCM 10545 / NBRC 100140 / 7) (Sulfolobus tokodaii), this protein is Urease subunit gamma/beta.